The sequence spans 100 residues: Aspartyl/glutamyl-tRNA(Asn/Gln) amidotransferase subunit C (100 aa).

Belongs to the GatC family. Heterotrimer of A, B and C subunits.

The enzyme catalyses L-glutamyl-tRNA(Gln) + L-glutamine + ATP + H2O = L-glutaminyl-tRNA(Gln) + L-glutamate + ADP + phosphate + H(+). It carries out the reaction L-aspartyl-tRNA(Asn) + L-glutamine + ATP + H2O = L-asparaginyl-tRNA(Asn) + L-glutamate + ADP + phosphate + 2 H(+). Allows the formation of correctly charged Asn-tRNA(Asn) or Gln-tRNA(Gln) through the transamidation of misacylated Asp-tRNA(Asn) or Glu-tRNA(Gln) in organisms which lack either or both of asparaginyl-tRNA or glutaminyl-tRNA synthetases. The reaction takes place in the presence of glutamine and ATP through an activated phospho-Asp-tRNA(Asn) or phospho-Glu-tRNA(Gln). This Corynebacterium aurimucosum (strain ATCC 700975 / DSM 44827 / CIP 107346 / CN-1) (Corynebacterium nigricans) protein is Aspartyl/glutamyl-tRNA(Asn/Gln) amidotransferase subunit C.